We begin with the raw amino-acid sequence, 460 residues long: Inactive ubiquitin carboxyl-terminal hydrolase MINDY-4B (460 aa).

The segment at 41-76 (TNNSTPQNHEGNHTSADENEDGTGLSQPKGQGHLPS) is disordered.

Belongs to the MINDY deubiquitinase family. FAM188 subfamily.

The polypeptide is Inactive ubiquitin carboxyl-terminal hydrolase MINDY-4B (Homo sapiens (Human)).